Reading from the N-terminus, the 285-residue chain is MSSTYKDNHPYHHHPHHHHHHPKREPNENNSGILYTPSPSPSPPTLKVNKDSHVIKKPPSPSSFSSAAKPRHPVIIYTHTPRIIHTNPKDFMALVQKLTGMTHSDEDLGGGNAMTDPGVVKSINRTVSEPTVDRKNNRNRCGGGNNYLRNYSGAGNGKGIFFNNTMISEDSESSSVITTEENIGEHGQVNSSLPYSAVAIPPQPPPHPPPPPPPPSMYDAAGINYGAYLPTFPIFPPANPADNFLCGNQPFANFDDPLFFAPNMRSSFSSSSSSGFDGLTEFRDF.

Residues 1 to 10 (MSSTYKDNHP) show a composition bias toward basic and acidic residues. The segment at 1-68 (MSSTYKDNHP…PSPSSFSSAA (68 aa)) is disordered. The segment covering 11 to 23 (YHHHPHHHHHHPK) has biased composition (basic residues). The VQ motif lies at 91 to 100 (FMALVQKLTG). Residues 195–218 (YSAVAIPPQPPPHPPPPPPPPSMY) form a disordered region. Pro residues predominate over residues 201–216 (PPQPPPHPPPPPPPPS).

The protein resides in the nucleus. Its function is as follows. May function as negative regulator of plant defense. This Arabidopsis thaliana (Mouse-ear cress) protein is VQ motif-containing protein 20.